Reading from the N-terminus, the 261-residue chain is Phosphoinositide-3-kinase-interacting protein 1 (261 aa).

A signal peptide spans 1-21; sequence MLLAWVRTILVSNMLLAEAYG. Residues 22–166 are Extracellular-facing; that stretch reads SGGCFWDNGH…NSKEKKDLGT (145 aa). A Kringle domain is found at 24–101; it reads GCFWDNGHLY…EKRPCQDLRC (78 aa). Disulfide bonds link cysteine 25/cysteine 101, cysteine 46/cysteine 82, and cysteine 70/cysteine 96. Residues 90–101 are compositionally biased toward basic and acidic residues; the sequence is APEKRPCQDLRC. The segment at 90-122 is disordered; it reads APEKRPCQDLRCPDTTSQGLPTSATETEEAAEV. A helical membrane pass occupies residues 167-187; the sequence is LGYVLGITMMVIIVVIGAGIV. Residues 188–261 are Cytoplasmic-facing; it reads LGYTYKRGKD…LMGQAGTPGA (74 aa).

It localises to the cell membrane. Its function is as follows. Negative regulator of hepatic phosphatidylinositol 3-kinase (PI3K) activity. This chain is Phosphoinositide-3-kinase-interacting protein 1 (PIK3IP1), found in Bos taurus (Bovine).